A 101-amino-acid chain; its full sequence is Protein S100-A3 (101 aa).

EF-hand domains follow at residues 12 to 47 (IVCT…TWTP) and 50 to 85 (FREC…LCLY). Residue K26 coordinates Ca(2+). Cysteines 30 and 68 form a disulfide. Citrulline; by PAD3 is present on R51. Positions 63, 65, 67, 69, and 74 each coordinate Ca(2+). Residues C83, C86, H87, and C93 each coordinate Zn(2+).

The protein belongs to the S-100 family. Homodimer and homotetramer for the citrullinated form. Post-translationally, more than half of the arginine residues undergo citrullination by PAD1 and PAD2. Arg-51 is specifically citrullinated by PAD3 and promotes tetramerization. Skin specific, specifically expressed in cuticle of pelage follicle.

The protein resides in the cytoplasm. Binds both calcium and zinc. May be involved in calcium-dependent cuticle cell differentiation, hair shaft and hair cuticular barrier formation. The chain is Protein S100-A3 (S100a3) from Mus musculus (Mouse).